We begin with the raw amino-acid sequence, 170 residues long: Acetyl-CoA decarbonylase/synthase complex subunit epsilon 1 (170 aa).

The protein belongs to the CdhB family. In terms of assembly, heterotetramer of two alpha and two epsilon subunits. The ACDS complex is made up of alpha, epsilon, beta, gamma and delta subunits with a probable stoichiometry of (alpha(2)epsilon(2))(4)-beta(8)-(gamma(1)delta(1))(8).

Its pathway is one-carbon metabolism; methanogenesis from acetate. Its function is as follows. Part of a complex that catalyzes the reversible cleavage of acetyl-CoA, allowing growth on acetate as sole source of carbon and energy. The alpha-epsilon subcomponent functions as a carbon monoxide dehydrogenase. The precise role of the epsilon subunit is unclear; it may have a stabilizing role within the alpha(2)epsilon(2) component and/or be involved in electron transfer to FAD during a potential FAD-mediated CO oxidation. This is Acetyl-CoA decarbonylase/synthase complex subunit epsilon 1 (cdhB1) from Methanosarcina thermophila.